The chain runs to 311 residues: tRNA-cytidine(32) 2-sulfurtransferase (311 aa).

The short motif at 47 to 52 (SGGKDS) is the PP-loop motif element. [4Fe-4S] cluster contacts are provided by cysteine 122, cysteine 125, and cysteine 213.

This sequence belongs to the TtcA family. In terms of assembly, homodimer. The cofactor is Mg(2+). [4Fe-4S] cluster serves as cofactor.

Its subcellular location is the cytoplasm. It carries out the reaction cytidine(32) in tRNA + S-sulfanyl-L-cysteinyl-[cysteine desulfurase] + AH2 + ATP = 2-thiocytidine(32) in tRNA + L-cysteinyl-[cysteine desulfurase] + A + AMP + diphosphate + H(+). Its pathway is tRNA modification. In terms of biological role, catalyzes the ATP-dependent 2-thiolation of cytidine in position 32 of tRNA, to form 2-thiocytidine (s(2)C32). The sulfur atoms are provided by the cysteine/cysteine desulfurase (IscS) system. The polypeptide is tRNA-cytidine(32) 2-sulfurtransferase (Salmonella dublin (strain CT_02021853)).